Consider the following 207-residue polypeptide: Superoxide dismutase [Mn] (207 aa).

His28, His76, Asp160, and His164 together coordinate Mn(2+).

It belongs to the iron/manganese superoxide dismutase family. Mn(2+) is required as a cofactor.

It carries out the reaction 2 superoxide + 2 H(+) = H2O2 + O2. Destroys superoxide anion radicals which are normally produced within the cells and which are toxic to biological systems. This chain is Superoxide dismutase [Mn] (sodA), found in Nocardia asteroides.